A 1639-amino-acid chain; its full sequence is Protein GFS12 (1639 aa).

The Protein kinase 1 domain maps to 206–294; sequence LEEKSKLRCL…IRPSNILLSD (89 aa). One can recognise a BEACH domain in the interval 336–608; sequence LKISSHLDWQ…FHGFGVDNKR (273 aa). Residues 715-788 enclose the Protein kinase 2 domain; sequence IAGDIFSIGC…AKSLLDSPYF (74 aa). 2 WD repeats span residues 1290-1333 and 1336-1373; these read AHHG…CVSS and AHEEVVNDIGILSSTGKVASCDGTIHVWNSQTGKLISL. Over residues 1377–1398 the composition is skewed to low complexity; that stretch reads SPSDQDQASSDPSSKNNSNPCN. The tract at residues 1377–1399 is disordered; that stretch reads SPSDQDQASSDPSSKNNSNPCNR. 3 WD repeats span residues 1465–1499, 1511–1549, and 1609–1639; these read ALCSGGSQTKHGDGASVSPSWIAAGFSSGQCRLFD, AHDGYVTKLVAPESHLLVSSSLDKTLRIWDLRKSWTPQP, and RVKSDLSTICVLPFSRLFIVGAHDGHLRICC.

Belongs to the protein kinase superfamily. Tyr protein kinase family. In terms of assembly, interacts (via protein kinase 2 domain) with BCHC1 (via PH-BEACH domain). In terms of tissue distribution, weakly expressed in the cotyledons of germinating seedlings. Restricted to the vascular tissues of cotyledons. Detected in root tips, apical meristem, young flower buds and receptacles.

Its function is as follows. May act predominantly to suppress BCHC1, which itself is a negative factor in protein storage vacuole (PSV) trafficking regulation and plant effector triggered immunity (ETI). Required for ETI, but not for cell death. This chain is Protein GFS12, found in Arabidopsis thaliana (Mouse-ear cress).